A 307-amino-acid chain; its full sequence is MKLIIATRKSQLALWQSEHVAQILKNTHQIEVLLEGFKTKGDVLLDSPLAKIGGKGLFTKELEESMLRKEAHLAVHSLKDVPSFFPQGLVLAAVSKREQSNDAMLSQNYKDFLSLPKGAKIGTTSLRRKMQLLLLRPDLDIISLRGNVNSRIEKLKNNDFDAIILAMAGIKRLNLDKQVNFVYEFSKDELIPAASQGALGIESINDEKILELLKCLNDENALIETSIEREFIATLEGGCQVPIGINAELLGDEICVRAVLGLPDGSEILKDKRMIKKNDFKGFGESLAKEFIAKGAKELLKKAESMI.

The residue at position 239 (C239) is an S-(dipyrrolylmethanemethyl)cysteine.

The protein belongs to the HMBS family. In terms of assembly, monomer. It depends on dipyrromethane as a cofactor.

It carries out the reaction 4 porphobilinogen + H2O = hydroxymethylbilane + 4 NH4(+). Its pathway is porphyrin-containing compound metabolism; protoporphyrin-IX biosynthesis; coproporphyrinogen-III from 5-aminolevulinate: step 2/4. In terms of biological role, tetrapolymerization of the monopyrrole PBG into the hydroxymethylbilane pre-uroporphyrinogen in several discrete steps. This Campylobacter jejuni subsp. jejuni serotype O:23/36 (strain 81-176) protein is Porphobilinogen deaminase.